The following is a 536-amino-acid chain: 3',5'-cyclic-AMP phosphodiesterase 4C (536 aa).

The disordered stretch occupies residues 49-69 (QALLGTPPQSSQQAAPAEESG). Positions 178-507 (VQTDQEEQLA…EWYQSRVPCS (330 aa)) constitute a PDEase domain. His-254 acts as the Proton donor in catalysis. His-254 is a 3',5'-cyclic AMP binding site. Residues His-254 and His-258 each coordinate AMP. Residues His-258, His-294, Asp-295, and Asp-412 each coordinate Zn(2+). The AMP site is built by Asp-295, Asp-412, Gln-463, and Phe-466. Residue Asp-295 participates in Mg(2+) binding. Asp-295 lines the Mn(2+) pocket. Residues Gln-463 and Phe-466 each coordinate 3',5'-cyclic AMP. The residue at position 507 (Ser-507) is a Phosphoserine.

Belongs to the cyclic nucleotide phosphodiesterase family. PDE4 subfamily. In terms of assembly, part of a complex containing AKAP5, ADCY5, ADCY6 and PKD2. Requires Zn(2+) as cofactor. Mg(2+) is required as a cofactor. It depends on Mn(2+) as a cofactor.

It localises to the cell projection. The protein resides in the cilium. It carries out the reaction 3',5'-cyclic AMP + H2O = AMP + H(+). The protein operates within purine metabolism; 3',5'-cyclic AMP degradation; AMP from 3',5'-cyclic AMP: step 1/1. Hydrolyzes the second messenger cAMP, which is a key regulator of many important physiological processes. This is 3',5'-cyclic-AMP phosphodiesterase 4C from Rattus norvegicus (Rat).